A 404-amino-acid chain; its full sequence is S-adenosylmethionine synthase (404 aa).

Position 17 (His17) interacts with ATP. Mg(2+) is bound at residue Asp19. Position 45 (Glu45) interacts with K(+). Residues Glu58 and Gln101 each coordinate L-methionine. The tract at residues 101-111 is flexible loop; that stretch reads QSPDINRGVDR. Residues 172–174, 246–247, Asp255, 261–262, Ala278, and Lys282 each bind ATP; these read DAK, RF, and RK. An L-methionine-binding site is contributed by Asp255. Lys286 serves as a coordination point for L-methionine.

Belongs to the AdoMet synthase family. Homotetramer; dimer of dimers. Mg(2+) is required as a cofactor. K(+) serves as cofactor.

It is found in the cytoplasm. It catalyses the reaction L-methionine + ATP + H2O = S-adenosyl-L-methionine + phosphate + diphosphate. The protein operates within amino-acid biosynthesis; S-adenosyl-L-methionine biosynthesis; S-adenosyl-L-methionine from L-methionine: step 1/1. Functionally, catalyzes the formation of S-adenosylmethionine (AdoMet) from methionine and ATP. The overall synthetic reaction is composed of two sequential steps, AdoMet formation and the subsequent tripolyphosphate hydrolysis which occurs prior to release of AdoMet from the enzyme. The polypeptide is S-adenosylmethionine synthase (Chlorobaculum tepidum (strain ATCC 49652 / DSM 12025 / NBRC 103806 / TLS) (Chlorobium tepidum)).